A 127-amino-acid polypeptide reads, in one-letter code: Small ribosomal subunit protein uS13 (127 aa).

The disordered stretch occupies residues 93-127 (RRGMPVRGQRTRTNARTRRGRRGQAIGIKKKATKK).

It belongs to the universal ribosomal protein uS13 family. As to quaternary structure, part of the 30S ribosomal subunit. Forms a loose heterodimer with protein S19. Forms two bridges to the 50S subunit in the 70S ribosome.

Functionally, located at the top of the head of the 30S subunit, it contacts several helices of the 16S rRNA. In the 70S ribosome it contacts the 23S rRNA (bridge B1a) and protein L5 of the 50S subunit (bridge B1b), connecting the 2 subunits; these bridges are implicated in subunit movement. Contacts the tRNAs in the A and P-sites. The protein is Small ribosomal subunit protein uS13 of Chloroflexus aurantiacus (strain ATCC 29366 / DSM 635 / J-10-fl).